Here is a 135-residue protein sequence, read N- to C-terminus: Poly [ADP-ribose] polymerase 1 (135 aa).

Residues 1–21 form the PARP alpha-helical domain; that stretch reads QAKVEMLDNLLDIEVAYSLLK. A PARP catalytic domain is found at 30 to 135; it reads DPIDINYEKL…APVTGYMFGK (106 aa). NAD(+) is bound by residues 104-106, G113, and R120; that span reads HGS. Residue K135 is part of the active site.

It belongs to the ARTD/PARP family. Homodimer; PARP-type zinc-fingers from separate parp1 molecules form a dimer module that specifically recognizes DNA strand breaks. Poly-ADP-ribosylated on serine, glutamate and aspartate residues by autocatalysis. Auto-ADP-ribosylation on serine takes place following interaction with HPF1. Auto poly-ADP-ribosylation on serine residues promotes its dissociation from chromatin.

The protein localises to the chromosome. The protein resides in the nucleus. Its subcellular location is the nucleolus. It is found in the cytoplasm. It localises to the cytosol. The catalysed reaction is NAD(+) + (ADP-D-ribosyl)n-acceptor = nicotinamide + (ADP-D-ribosyl)n+1-acceptor + H(+).. The enzyme catalyses L-seryl-[protein] + NAD(+) = O-(ADP-D-ribosyl)-L-seryl-[protein] + nicotinamide + H(+). It catalyses the reaction L-aspartyl-[protein] + NAD(+) = 4-O-(ADP-D-ribosyl)-L-aspartyl-[protein] + nicotinamide. It carries out the reaction L-glutamyl-[protein] + NAD(+) = 5-O-(ADP-D-ribosyl)-L-glutamyl-[protein] + nicotinamide. The catalysed reaction is L-tyrosyl-[protein] + NAD(+) = O-(ADP-D-ribosyl)-L-tyrosyl-[protein] + nicotinamide + H(+). The enzyme catalyses L-histidyl-[protein] + NAD(+) = N(tele)-(ADP-D-ribosyl)-L-histidyl-[protein] + nicotinamide + H(+). With respect to regulation, ADP-ribosyltransferase activity is regulated via an allosteric activation mechanism. In absence of activation signal, parp1 is autoinhibited by the PARP alpha-helical domain (also named HD region), which prevents effective NAD(+)-binding. Activity is highly stimulated by signals, such as DNA strand breaks. Binding to damaged DNA unfolds the PARP alpha-helical domain, relieving autoinhibition. Poly-ADP-ribosyltransferase activity is tightly regulated and parp1 is removed from damaged chromatin following initial poly-ADP-ribosylation of chromatin to avoid prolonged residence (trapping) that has cytotoxic consequences. A number of factors or post-translational modifications (auto-poly-ADP-ribosylation) promote parp1 removal from chromatin. Its function is as follows. Poly-ADP-ribosyltransferase that mediates poly-ADP-ribosylation of proteins and plays a key role in DNA repair. Mediates glutamate, aspartate, serine, histidine or tyrosine ADP-ribosylation of proteins: the ADP-D-ribosyl group of NAD(+) is transferred to the acceptor carboxyl group of target residues and further ADP-ribosyl groups are transferred to the 2'-position of the terminal adenosine moiety, building up a polymer with an average chain length of 20-30 units. Serine ADP-ribosylation of proteins constitutes the primary form of ADP-ribosylation of proteins in response to DNA damage. Specificity for the different amino acids is conferred by interacting factors, such as hpf1 and nmnat1. Following interaction with hpf1, catalyzes serine ADP-ribosylation of target proteins; hpf1 confers serine specificity by completing the parp1 active site. Also catalyzes tyrosine ADP-ribosylation of target proteins following interaction with hpf1. Following interaction with nmnat1, catalyzes glutamate and aspartate ADP-ribosylation of target proteins; nmnat1 confers glutamate and aspartate specificity. Parp1 initiates the repair of DNA breaks: recognizes and binds DNA breaks within chromatin and recruits hpf1, licensing serine ADP-ribosylation of target proteins, such as histones (H2BS6ADPr and H3S10ADPr), thereby promoting decompaction of chromatin and the recruitment of repair factors leading to the reparation of DNA strand breaks. In addition to base excision repair (BER) pathway, also involved in double-strand breaks (DSBs) repair. Mediates the poly-ADP-ribosylation of a number of proteins. In addition to proteins, also able to ADP-ribosylate DNA: catalyzes ADP-ribosylation of DNA strand break termini containing terminal phosphates and a 2'-OH group in single- and double-stranded DNA, respectively. Parp1-mediated DNA repair in neurons plays a role in sleep: senses DNA damage in neurons and promotes sleep, facilitating efficient DNA repair. In addition to DNA repair, also involved in other processes, such as transcription regulation, programmed cell death, membrane repair, adipogenesis and innate immunity. Acts as a repressor of transcription: binds to nucleosomes and modulates chromatin structure in a manner similar to histone H1, thereby altering RNA polymerase II. Acts both as a positive and negative regulator of transcription elongation, depending on the context. Poly-ADP-ribose chains generated by parp1 also play a role in poly-ADP-ribose-dependent cell death, a process named parthanatos. Also acts as a negative regulator of the cGAS-STING pathway by mediating poly-ADP-ribosylation and inactivation of cgas. Acts as a negative regulator of adipogenesis by catalyzing poly ADP-ribosylation of histone H2B on 'Glu-35' (H2BE35ADPr). The sequence is that of Poly [ADP-ribose] polymerase 1 (parp1) from Oncorhynchus masou (Cherry salmon).